The chain runs to 487 residues: 3-octaprenyl-4-hydroxybenzoate carboxy-lyase (487 aa).

Mn(2+) is bound at residue N172. Prenylated FMN-binding positions include I175–R177, R189–L191, and R194–G195. E238 is a Mn(2+) binding site. The active-site Proton donor is D287.

The protein belongs to the UbiD family. As to quaternary structure, homohexamer. Requires prenylated FMN as cofactor. Mn(2+) serves as cofactor.

The protein resides in the cell membrane. It carries out the reaction a 4-hydroxy-3-(all-trans-polyprenyl)benzoate + H(+) = a 2-(all-trans-polyprenyl)phenol + CO2. The protein operates within cofactor biosynthesis; ubiquinone biosynthesis. Its function is as follows. Catalyzes the decarboxylation of 3-octaprenyl-4-hydroxy benzoate to 2-octaprenylphenol, an intermediate step in ubiquinone biosynthesis. The polypeptide is 3-octaprenyl-4-hydroxybenzoate carboxy-lyase (Nitrosomonas eutropha (strain DSM 101675 / C91 / Nm57)).